The following is a 256-amino-acid chain: Thiazole synthase (256 aa).

The active-site Schiff-base intermediate with DXP is the Lys-95. 1-deoxy-D-xylulose 5-phosphate-binding positions include Gly-156, 182–183 (AG), and 204–205 (NT).

Belongs to the ThiG family. Homotetramer. Forms heterodimers with either ThiH or ThiS.

Its subcellular location is the cytoplasm. The catalysed reaction is [ThiS sulfur-carrier protein]-C-terminal-Gly-aminoethanethioate + 2-iminoacetate + 1-deoxy-D-xylulose 5-phosphate = [ThiS sulfur-carrier protein]-C-terminal Gly-Gly + 2-[(2R,5Z)-2-carboxy-4-methylthiazol-5(2H)-ylidene]ethyl phosphate + 2 H2O + H(+). It participates in cofactor biosynthesis; thiamine diphosphate biosynthesis. Functionally, catalyzes the rearrangement of 1-deoxy-D-xylulose 5-phosphate (DXP) to produce the thiazole phosphate moiety of thiamine. Sulfur is provided by the thiocarboxylate moiety of the carrier protein ThiS. In vitro, sulfur can be provided by H(2)S. The polypeptide is Thiazole synthase (Escherichia fergusonii (strain ATCC 35469 / DSM 13698 / CCUG 18766 / IAM 14443 / JCM 21226 / LMG 7866 / NBRC 102419 / NCTC 12128 / CDC 0568-73)).